Here is a 211-residue protein sequence, read N- to C-terminus: Putative truncated flagellar export/assembly protein LafU (211 aa).

An OmpA-like domain is found at 58–176 (LRVLIKDDQN…RIEIMVLTKS (119 aa)).

The protein belongs to the MotB family.

This is Putative truncated flagellar export/assembly protein LafU from Escherichia coli (strain K12).